The following is a 662-amino-acid chain: MSDLFSFNKEKKNKLVDNNYSAKDIEVLEGLEPVRKRPGMYIGGTDSNAMHHLVSEVLDNAMDEAVAGFASIITIKMHQDHSITIFDNGRGIPIDNHPKFPDKSALEVILTTLHSGGKFSNNVYHTAGGLHGVGISVVNALSKHLEIKVYKQGKLYSQSYSKGEKLTDLICEEASKRLRGTSINFTPDPEIFSEKLHFNPKKIYELARSKAYLYRGVTIEWECEVEVPSDIPKKALINFPNGLKDYLSSKITLDNLIIPEIFSGNIESTPDEIKLEWAICWQNNDNSAFIQSYCNTVPTPQGGTHEQGLKSAILRGLKAYGEMIGNKKAANLTIEDILETASVVLSIFIAEPSFQGQTKEKLVSNGVSKPVENIIKDHFDHFLSSDKALATNLLEHVIAIAEFRISKKNEKNISRKNATQKLRLPGKLADCTRTTPGGTELFIVEGDSAGGSAKQARNRETQAVLPLWGKVLNVASSTLEKIVNNQAIQDLEIALACGSLKNYKEENLRYEKIIIMTDADVDGAHIASLLMTFFFLRMPKLVEEGHLYLAKPPLYRLTQSNKTYYAGDEEEKAKLTDKLSKASKAKIEVGRFKGLGEMMPAQLKETTMHPEKRSLLKVTLEDFQNVDKIVDDLMGKKPEKRFQFIYEQALVKMDKIINELDI.

ATP is bound by residues tyrosine 20, asparagine 60, aspartate 87, 129–135 (GLHGVGI), and lysine 359. One can recognise a Toprim domain in the interval 439–553 (TELFIVEGDS…EGHLYLAKPP (115 aa)). Mg(2+)-binding residues include glutamate 445, aspartate 518, and aspartate 520.

Belongs to the type II topoisomerase family. ParE type 1 subfamily. In terms of assembly, heterotetramer composed of ParC and ParE. The cofactor is Mg(2+). It depends on Mn(2+) as a cofactor. Requires Ca(2+) as cofactor.

The catalysed reaction is ATP-dependent breakage, passage and rejoining of double-stranded DNA.. In terms of biological role, topoisomerase IV is essential for chromosome segregation. It relaxes supercoiled DNA. Performs the decatenation events required during the replication of a circular DNA molecule. This chain is DNA topoisomerase 4 subunit B, found in Rickettsia felis (strain ATCC VR-1525 / URRWXCal2) (Rickettsia azadi).